We begin with the raw amino-acid sequence, 239 residues long: UPF0173 metal-dependent hydrolase rrnAC0300 (239 aa).

Belongs to the UPF0173 family.

The polypeptide is UPF0173 metal-dependent hydrolase rrnAC0300 (Haloarcula marismortui (strain ATCC 43049 / DSM 3752 / JCM 8966 / VKM B-1809) (Halobacterium marismortui)).